Consider the following 359-residue polypeptide: Serine/threonine-protein phosphatase 2A activator 2 (359 aa).

Belongs to the PTPA-type PPIase family.

The protein resides in the cytoplasm. It catalyses the reaction [protein]-peptidylproline (omega=180) = [protein]-peptidylproline (omega=0). Functionally, PPIases accelerate the folding of proteins. It catalyzes the cis-trans isomerization of proline imidic peptide bonds in oligopeptides. Acts as a regulatory subunit for PP2A-like phosphatases modulating their activity or substrate specificity, probably by inducing a conformational change in the catalytic subunit, a direct target of the PPIase. Can reactivate inactive phosphatase PP2A-phosphatase methylesterase complexes (PP2Ai) in presence of ATP and Mg(2+) by dissociating the inactive form from the complex. This Eremothecium gossypii (strain ATCC 10895 / CBS 109.51 / FGSC 9923 / NRRL Y-1056) (Yeast) protein is Serine/threonine-protein phosphatase 2A activator 2 (RRD2).